Here is a 92-residue protein sequence, read N- to C-terminus: MNWRNLVSDDITSEAQTIAVGQLRAFIERIERLEEEKKTIGDDIKEVYAELKGSGFDSKVVRTIIRLRKKEDHERQEEEAMLQLYMDALGMS.

This sequence belongs to the UPF0335 family.

This Brucella melitensis biotype 1 (strain ATCC 23456 / CCUG 17765 / NCTC 10094 / 16M) protein is UPF0335 protein BMEI0289.